A 101-amino-acid chain; its full sequence is Integration host factor subunit alpha (101 aa).

It belongs to the bacterial histone-like protein family. Heterodimer of an alpha and a beta chain.

This protein is one of the two subunits of integration host factor, a specific DNA-binding protein that functions in genetic recombination as well as in transcriptional and translational control. The polypeptide is Integration host factor subunit alpha (Saccharophagus degradans (strain 2-40 / ATCC 43961 / DSM 17024)).